A 295-amino-acid chain; its full sequence is Bifunctional protein FolD (295 aa).

NADP(+) contacts are provided by residues 167–169 (GRS), Ser-192, and Ile-233.

Belongs to the tetrahydrofolate dehydrogenase/cyclohydrolase family. Homodimer.

The enzyme catalyses (6R)-5,10-methylene-5,6,7,8-tetrahydrofolate + NADP(+) = (6R)-5,10-methenyltetrahydrofolate + NADPH. It catalyses the reaction (6R)-5,10-methenyltetrahydrofolate + H2O = (6R)-10-formyltetrahydrofolate + H(+). Its pathway is one-carbon metabolism; tetrahydrofolate interconversion. Functionally, catalyzes the oxidation of 5,10-methylenetetrahydrofolate to 5,10-methenyltetrahydrofolate and then the hydrolysis of 5,10-methenyltetrahydrofolate to 10-formyltetrahydrofolate. The sequence is that of Bifunctional protein FolD from Paramagnetospirillum magneticum (strain ATCC 700264 / AMB-1) (Magnetospirillum magneticum).